Reading from the N-terminus, the 450-residue chain is Tubulin alpha chain (450 aa).

A GTP-binding site is contributed by Gln-11. Lys-40 carries the N6-acetyllysine modification. Positions 71, 140, 144, 145, 179, 206, and 228 each coordinate GTP. Glu-71 contributes to the Mg(2+) binding site. Glu-254 is an active-site residue.

This sequence belongs to the tubulin family. In terms of assembly, dimer of alpha and beta chains. A typical microtubule is a hollow water-filled tube with an outer diameter of 25 nm and an inner diameter of 15 nM. Alpha-beta heterodimers associate head-to-tail to form protofilaments running lengthwise along the microtubule wall with the beta-tubulin subunit facing the microtubule plus end conferring a structural polarity. Microtubules usually have 13 protofilaments but different protofilament numbers can be found in some organisms and specialized cells. Requires Mg(2+) as cofactor. Acetylation of alpha chains at Lys-40 stabilizes microtubules and affects affinity and processivity of microtubule motors. This modification has a role in multiple cellular functions, ranging from cell motility, cell cycle progression or cell differentiation to intracellular trafficking and signaling.

Its subcellular location is the cytoplasm. It is found in the cytoskeleton. It catalyses the reaction GTP + H2O = GDP + phosphate + H(+). Functionally, tubulin is the major constituent of microtubules, a cylinder consisting of laterally associated linear protofilaments composed of alpha- and beta-tubulin heterodimers. Microtubules grow by the addition of GTP-tubulin dimers to the microtubule end, where a stabilizing cap forms. Below the cap, tubulin dimers are in GDP-bound state, owing to GTPase activity of alpha-tubulin. The protein is Tubulin alpha chain of Oxytricha granulifera (Ciliate).